Reading from the N-terminus, the 443-residue chain is tRNA modification GTPase MnmE (443 aa).

3 residues coordinate (6S)-5-formyl-5,6,7,8-tetrahydrofolate: R23, E82, and K121. Residues 215–364 (GTSIVLAGHP…LKQFIQKWMQ (150 aa)) enclose the TrmE-type G domain. N225 is a K(+) binding site. GTP is bound by residues 225 to 230 (NVGKSS), 244 to 250 (TDIPGTT), and 269 to 272 (DSAG). Position 229 (S229) interacts with Mg(2+). K(+) contacts are provided by T244, I246, and T249. Position 250 (T250) interacts with Mg(2+). K443 is a (6S)-5-formyl-5,6,7,8-tetrahydrofolate binding site.

Belongs to the TRAFAC class TrmE-Era-EngA-EngB-Septin-like GTPase superfamily. TrmE GTPase family. As to quaternary structure, homodimer. Heterotetramer of two MnmE and two MnmG subunits. K(+) is required as a cofactor.

The protein localises to the cytoplasm. Exhibits a very high intrinsic GTPase hydrolysis rate. Involved in the addition of a carboxymethylaminomethyl (cmnm) group at the wobble position (U34) of certain tRNAs, forming tRNA-cmnm(5)s(2)U34. The chain is tRNA modification GTPase MnmE from Chlamydia caviae (strain ATCC VR-813 / DSM 19441 / 03DC25 / GPIC) (Chlamydophila caviae).